We begin with the raw amino-acid sequence, 228 residues long: MTQQEIKLIAFDLDGTLLDSVPDLAVAADQATRAVGFPGVTELQVRDYVGNGADILIGRALSQSLTINPELSDELRAQARELFDDFYQQTGHKLSHLYPTVKETLKALHQAGFTLALVTNKPSKFVPDVLQQHGIADYFVDVLGGDSFPEKKPNPIALNWLMEKHQIQPTEMLMVGDSKNDILAAKNAGCASFGLTYGYNHGEPISASEPDFVADSLAQLLDVVLVSA.

Asp12 acts as the Nucleophile in catalysis. Residues Asp12, Asp14, and Asp177 each contribute to the Mg(2+) site.

Belongs to the HAD-like hydrolase superfamily. CbbY/CbbZ/Gph/YieH family. Mg(2+) is required as a cofactor.

It carries out the reaction 2-phosphoglycolate + H2O = glycolate + phosphate. Its pathway is organic acid metabolism; glycolate biosynthesis; glycolate from 2-phosphoglycolate: step 1/1. Its function is as follows. Specifically catalyzes the dephosphorylation of 2-phosphoglycolate. Is involved in the dissimilation of the intracellular 2-phosphoglycolate formed during the DNA repair of 3'-phosphoglycolate ends, a major class of DNA lesions induced by oxidative stress. In Vibrio vulnificus (strain YJ016), this protein is Phosphoglycolate phosphatase.